The primary structure comprises 265 residues: 3-deoxy-manno-octulosonate cytidylyltransferase (265 aa).

The protein belongs to the KdsB family.

It localises to the cytoplasm. The enzyme catalyses 3-deoxy-alpha-D-manno-oct-2-ulosonate + CTP = CMP-3-deoxy-beta-D-manno-octulosonate + diphosphate. Its pathway is nucleotide-sugar biosynthesis; CMP-3-deoxy-D-manno-octulosonate biosynthesis; CMP-3-deoxy-D-manno-octulosonate from 3-deoxy-D-manno-octulosonate and CTP: step 1/1. The protein operates within bacterial outer membrane biogenesis; lipopolysaccharide biosynthesis. Activates KDO (a required 8-carbon sugar) for incorporation into bacterial lipopolysaccharide in Gram-negative bacteria. The chain is 3-deoxy-manno-octulosonate cytidylyltransferase from Delftia acidovorans (strain DSM 14801 / SPH-1).